The primary structure comprises 113 residues: Dynein light chain Tctex-type 1 (113 aa).

Methionine 1 carries the post-translational modification N-acetylmethionine. Residues 41–113 (QWTTNVVEQT…CIVSAFGLSI (73 aa)) form an interaction with GNB1 region.

This sequence belongs to the dynein light chain Tctex-type family. In terms of assembly, homodimer. The cytoplasmic dynein 1 complex consists of two catalytic heavy chains (HCs) and a number of non-catalytic subunits presented by intermediate chains (ICs), light intermediate chains (LICs) and light chains (LCs); the composition seems to vary in respect to the IC, LIC and LC composition. The heavy chain homodimer serves as a scaffold for the probable homodimeric assembly of the respective non-catalytic subunits. The ICs and LICs bind directly to the HC dimer and dynein LCs assemble on the IC dimer. DYNLT1 and DYNLT3 compete for association with dynein IC (DYNC1I1 or DYNC1I2). Self-associates. Interacts with RHO. Interacts with DYNC1I1 and DYNC1I2. Interacts with DOC2A, DOC2B and SCN10A. Interacts with PVR. Interacts with SVIL isoform 2. Interacts with GNB1; the interaction occurs in presence of guanine nucleotide-binding protein G(T) subunit gamma; the interaction diminishes the association of DYNLT1 with dynein IC (DYNC1I1 or DYNC1I2). Interacts with GNB2, GNB3 and GNB5; the interactions occur in presence of guanine nucleotide-binding protein G(T) subunit gamma. Interacts with ACVR2B and ARHGEF2. Interacts with DNAI4. Interacts with CFAP61. In terms of processing, phosphorylated by BMPR2. The phosphorylation status is proposed to regulate the association with the cytoplasmic dynein complex and may have role in cytoplasmic dynein cargo release.

The protein resides in the golgi apparatus. It is found in the cytoplasm. Its subcellular location is the cytoskeleton. It localises to the spindle. Acts as one of several non-catalytic accessory components of the cytoplasmic dynein 1 complex that are thought to be involved in linking dynein to cargos and to adapter proteins that regulate dynein function. Cytoplasmic dynein 1 acts as a motor for the intracellular retrograde motility of vesicles and organelles along microtubules. Binds to transport cargos and is involved in apical cargo transport such as rhodopsin-bearing vesicles in polarized epithelia. Is involved in intracellular targeting of D-type retrovirus gag polyproteins to the cytoplasmic assembly site. May also be a accessory component of axonemal dynein. Its function is as follows. Plays a role in neuronal morphogenesis; the function is independent of cytoplasmic dynein and seems to be coupled to regulation of the actin cytoskeleton by enhancing Rac1 activity. Required for neurite outgrowth. The function in neurogenesis may be regulated by association with a G-protein beta-gamma dimer. May function as a receptor-independent activator of heterotrimeric G-protein signaling; the activation appears to be independent of a nucleotide exchange. Plays a role in regulating neurogenesis; inhibits the genesis of neurons from precursor cells during cortical development presumably by antagonizing ARHGEF2. Unrelated to the role in retrograde microtubule-associated movement may play a role in the dimerization of cytoplasmic proteins/domains such as for ACVR2B. Binds to the cytoplasmic domain of ACVR2B and, in vitro, inhibits ACVR2B signaling. Involved in the regulation of mitotic spindle orientation. In Rattus norvegicus (Rat), this protein is Dynein light chain Tctex-type 1 (Dynlt1).